Consider the following 1037-residue polypeptide: Serine/threonine-protein kinase ULK2 (1037 aa).

Positions 9 to 271 (YCKRDLVGHG…FEAFFSHPFL (263 aa)) constitute a Protein kinase domain. ATP contacts are provided by residues 15–23 (VGHGAFAVV) and K39. Catalysis depends on D131, which acts as the Proton acceptor. A disordered region spans residues 319–350 (ENLSSPPLGPPNYLQVSKDSASNSSKNSSCDT). Residues 335–348 (SKDSASNSSKNSSC) are compositionally biased toward low complexity. At S430 the chain carries Phosphoserine. 4 disordered regions span residues 452-480 (CSPV…PSPL), 494-515 (GHPQ…PQTQ), 540-594 (QKLR…KTPL), and 626-697 (HGPA…NTER). Composition is skewed to polar residues over residues 506-515 (SSGSPVPQTQ) and 571-585 (LGTS…SPRN). The segment covering 632–643 (QSKDGNDPRECS) has biased composition (basic and acidic residues). Over residues 658 to 678 (QQQSKAVFGRSVSTGKLSEQQ) the composition is skewed to polar residues. Residues S772 and S781 each carry the phosphoserine modification. Residues 813-1037 (ELPEETLMER…SALCCSTATV (225 aa)) form a CTD-like region region.

The protein belongs to the protein kinase superfamily. Ser/Thr protein kinase family. APG1/unc-51/ULK1 subfamily. In terms of assembly, component of a complex consisting of ATG13/KIAA0652, ULK1 and RB1CC1/FIP200. Interacts (via C-terminus) with ATG13/KIAA0652. Associates with the mammalian target of rapamycin complex 1 (mTORC1) through an interaction with RPTOR. Interacts with SYNGAP1. In terms of processing, autophosphorylated. In response to nutrient limitation, probably phosphorylated and activated by AMPK, leading to activate autophagy. In terms of tissue distribution, widely expressed.

The protein resides in the cytoplasmic vesicle membrane. The enzyme catalyses L-seryl-[protein] + ATP = O-phospho-L-seryl-[protein] + ADP + H(+). It catalyses the reaction L-threonyl-[protein] + ATP = O-phospho-L-threonyl-[protein] + ADP + H(+). Serine/threonine-protein kinase involved in autophagy in response to starvation. Acts upstream of phosphatidylinositol 3-kinase PIK3C3 to regulate the formation of autophagophores, the precursors of autophagosomes. Part of regulatory feedback loops in autophagy: acts both as a downstream effector and a negative regulator of mammalian target of rapamycin complex 1 (mTORC1) via interaction with RPTOR. Activated via phosphorylation by AMPK, also acts as a negative regulator of AMPK through phosphorylation of the AMPK subunits PRKAA1, PRKAB2 and PRKAG1. May phosphorylate ATG13/KIAA0652, FRS2, FRS3 and RPTOR; however such data need additional evidences. Not involved in ammonia-induced autophagy or in autophagic response of cerebellar granule neurons (CGN) to low potassium concentration. Plays a role early in neuronal differentiation and is required for granule cell axon formation: may govern axon formation via Ras-like GTPase signaling and through regulation of the Rab5-mediated endocytic pathways within developing axons. The sequence is that of Serine/threonine-protein kinase ULK2 (Ulk2) from Mus musculus (Mouse).